The sequence spans 217 residues: 3,4-dihydroxy-2-butanone 4-phosphate synthase (217 aa).

D-ribulose 5-phosphate-binding positions include 37–38, aspartate 42, 150–154, and glutamate 174; these read RE and RGGHT. Glutamate 38 contacts Mg(2+). Histidine 153 lines the Mg(2+) pocket.

This sequence belongs to the DHBP synthase family. Homodimer. Requires Mg(2+) as cofactor. Mn(2+) serves as cofactor.

It carries out the reaction D-ribulose 5-phosphate = (2S)-2-hydroxy-3-oxobutyl phosphate + formate + H(+). It functions in the pathway cofactor biosynthesis; riboflavin biosynthesis; 2-hydroxy-3-oxobutyl phosphate from D-ribulose 5-phosphate: step 1/1. Its function is as follows. Catalyzes the conversion of D-ribulose 5-phosphate to formate and 3,4-dihydroxy-2-butanone 4-phosphate. This is 3,4-dihydroxy-2-butanone 4-phosphate synthase from Salmonella arizonae (strain ATCC BAA-731 / CDC346-86 / RSK2980).